The chain runs to 783 residues: Endonuclease MutS2 (783 aa).

328-335 (GPNTGGKT) lines the ATP pocket. Residues 708–783 (LDLRGKRYEE…GSGCTIATLG (76 aa)) enclose the Smr domain.

This sequence belongs to the DNA mismatch repair MutS family. MutS2 subfamily. In terms of assembly, homodimer. Binds to stalled ribosomes, contacting rRNA.

Its function is as follows. Endonuclease that is involved in the suppression of homologous recombination and thus may have a key role in the control of bacterial genetic diversity. Acts as a ribosome collision sensor, splitting the ribosome into its 2 subunits. Detects stalled/collided 70S ribosomes which it binds and splits by an ATP-hydrolysis driven conformational change. Acts upstream of the ribosome quality control system (RQC), a ribosome-associated complex that mediates the extraction of incompletely synthesized nascent chains from stalled ribosomes and their subsequent degradation. Probably generates substrates for RQC. In Streptococcus thermophilus (strain ATCC BAA-491 / LMD-9), this protein is Endonuclease MutS2.